The primary structure comprises 616 residues: Dihydroxy-acid dehydratase (616 aa).

Asp-81 is a binding site for Mg(2+). Cys-122 is a [2Fe-2S] cluster binding site. Asp-123 and Lys-124 together coordinate Mg(2+). An N6-carboxylysine modification is found at Lys-124. Cys-195 contacts [2Fe-2S] cluster. Glu-491 is a Mg(2+) binding site. The Proton acceptor role is filled by Ser-517.

This sequence belongs to the IlvD/Edd family. In terms of assembly, homodimer. Requires [2Fe-2S] cluster as cofactor. It depends on Mg(2+) as a cofactor.

The catalysed reaction is (2R)-2,3-dihydroxy-3-methylbutanoate = 3-methyl-2-oxobutanoate + H2O. The enzyme catalyses (2R,3R)-2,3-dihydroxy-3-methylpentanoate = (S)-3-methyl-2-oxopentanoate + H2O. It participates in amino-acid biosynthesis; L-isoleucine biosynthesis; L-isoleucine from 2-oxobutanoate: step 3/4. Its pathway is amino-acid biosynthesis; L-valine biosynthesis; L-valine from pyruvate: step 3/4. In terms of biological role, functions in the biosynthesis of branched-chain amino acids. Catalyzes the dehydration of (2R,3R)-2,3-dihydroxy-3-methylpentanoate (2,3-dihydroxy-3-methylvalerate) into 2-oxo-3-methylpentanoate (2-oxo-3-methylvalerate) and of (2R)-2,3-dihydroxy-3-methylbutanoate (2,3-dihydroxyisovalerate) into 2-oxo-3-methylbutanoate (2-oxoisovalerate), the penultimate precursor to L-isoleucine and L-valine, respectively. The sequence is that of Dihydroxy-acid dehydratase from Yersinia pseudotuberculosis serotype I (strain IP32953).